Here is a 468-residue protein sequence, read N- to C-terminus: Probable Xaa-Pro aminopeptidase pepP (468 aa).

The Mn(2+) site is built by D265, D276, E399, and E439.

This sequence belongs to the peptidase M24B family. Mn(2+) serves as cofactor.

The catalysed reaction is Release of any N-terminal amino acid, including proline, that is linked to proline, even from a dipeptide or tripeptide.. Its function is as follows. Catalyzes the removal of a penultimate prolyl residue from the N-termini of peptides. The sequence is that of Probable Xaa-Pro aminopeptidase pepP (pepP) from Aspergillus fumigatus (strain CBS 144.89 / FGSC A1163 / CEA10) (Neosartorya fumigata).